Consider the following 473-residue polypeptide: Ribulose bisphosphate carboxylase large chain (473 aa).

2 residues coordinate substrate: asparagine 116 and threonine 166. The active-site Proton acceptor is the lysine 168. Lysine 170 contacts substrate. Mg(2+) contacts are provided by lysine 194, aspartate 196, and glutamate 197. N6-carboxylysine is present on lysine 194. The active-site Proton acceptor is the histidine 287. Residues arginine 288, histidine 320, and serine 372 each coordinate substrate.

It belongs to the RuBisCO large chain family. Type I subfamily. Heterohexadecamer of 8 large chains and 8 small chains. The cofactor is Mg(2+).

The catalysed reaction is 2 (2R)-3-phosphoglycerate + 2 H(+) = D-ribulose 1,5-bisphosphate + CO2 + H2O. It carries out the reaction D-ribulose 1,5-bisphosphate + O2 = 2-phosphoglycolate + (2R)-3-phosphoglycerate + 2 H(+). In terms of biological role, ruBisCO catalyzes two reactions: the carboxylation of D-ribulose 1,5-bisphosphate, the primary event in carbon dioxide fixation, as well as the oxidative fragmentation of the pentose substrate. Both reactions occur simultaneously and in competition at the same active site. The protein is Ribulose bisphosphate carboxylase large chain of Cupriavidus metallidurans (strain ATCC 43123 / DSM 2839 / NBRC 102507 / CH34) (Ralstonia metallidurans).